The primary structure comprises 428 residues: Enolase (428 aa).

Residue Gln163 participates in (2R)-2-phosphoglycerate binding. Glu205 acts as the Proton donor in catalysis. Asp242, Glu285, and Asp312 together coordinate Mg(2+). Lys337, Arg366, Ser367, and Lys388 together coordinate (2R)-2-phosphoglycerate. The Proton acceptor role is filled by Lys337.

The protein belongs to the enolase family. Requires Mg(2+) as cofactor.

It is found in the cytoplasm. Its subcellular location is the secreted. It localises to the cell surface. It catalyses the reaction (2R)-2-phosphoglycerate = phosphoenolpyruvate + H2O. It functions in the pathway carbohydrate degradation; glycolysis; pyruvate from D-glyceraldehyde 3-phosphate: step 4/5. In terms of biological role, catalyzes the reversible conversion of 2-phosphoglycerate (2-PG) into phosphoenolpyruvate (PEP). It is essential for the degradation of carbohydrates via glycolysis. This is Enolase from Neisseria meningitidis serogroup B (strain ATCC BAA-335 / MC58).